Consider the following 501-residue polypeptide: Cytochrome P450 81F4 (501 aa).

Lysine 245 is covalently cross-linked (Glycyl lysine isopeptide (Lys-Gly) (interchain with G-Cter in ubiquitin)). Residues 285–305 (IIIKGLMLGIMVASSETSALT) traverse the membrane as a helical segment. Cysteine 435 serves as a coordination point for heme.

This sequence belongs to the cytochrome P450 family. It depends on heme as a cofactor.

It is found in the membrane. The protein operates within secondary metabolite biosynthesis. In terms of biological role, involved in indole glucosinolate biosynthesis. Catalyzes hydroxylation reactions of the glucosinolate indole ring. Converts indol-3-yl-methylglucosinolate (I3M) to 1-hydroxy-indol-3-yl-methylglucosinolate (1OH-I3M) intermediate. This hydroxy intermediates is converted to 1-methoxy-indol-3-yl-methylglucosinolate (1MO-I3M) by indole glucosinolate methyltransferase 1 and 2 (IGMT1 and IGMT2). The polypeptide is Cytochrome P450 81F4 (Arabidopsis thaliana (Mouse-ear cress)).